We begin with the raw amino-acid sequence, 431 residues long: WD repeat-containing protein 18 (431 aa).

WD repeat units lie at residues 36 to 75 (GGQA…QLQQ), 78 to 116 (MCPG…LLVI), 119 to 158 (RHYQ…QADP), 170 to 211 (QHTL…LLLS), 213 to 257 (LFDM…SFQP), and 267 to 306 (GHRN…CLRT).

The protein belongs to the WD repeat IPI3/WDR18 family. Component of the 5FMC complex, at least composed of PELP1, LAS1L, TEX10, WDR18 and SENP3; the complex interacts with methylated CHTOP and ZNF148. Interacts with NOL9. Component of the PELP1 complex, composed of at least PELP1, TEX10 and WDR18. The complex interacts with pre-60S ribosome particles.

It localises to the nucleus. Its subcellular location is the nucleolus. The protein localises to the nucleoplasm. It is found in the cytoplasm. The protein resides in the dynein axonemal particle. Functionally, functions as a component of the Five Friends of Methylated CHTOP (5FMC) complex; the 5FMC complex is recruited to ZNF148 by methylated CHTOP, leading to desumoylation of ZNF148 and subsequent transactivation of ZNF148 target genes. Component of the PELP1 complex involved in the nucleolar steps of 28S rRNA maturation and the subsequent nucleoplasmic transit of the pre-60S ribosomal subunit. May play a role during development. In Mus musculus (Mouse), this protein is WD repeat-containing protein 18 (Wdr18).